The following is a 520-amino-acid chain: Cytosol aminopeptidase (520 aa).

Zn(2+) is bound by residues L200, M201, K280, and D285. Substrate contacts are provided by K280, D285, S290, and K292. D285 lines the Mg(2+) pocket. K292 is an active-site residue. Zn(2+)-binding residues include R301, D303, D362, and E364. Residues D303 and D362 each contribute to the substrate site. The Mg(2+) site is built by D362 and E364. R366 is an active-site residue.

The protein belongs to the peptidase M17 family. As to quaternary structure, homohexamer. Zn(2+) is required as a cofactor. It depends on Mn(2+) as a cofactor.

Its subcellular location is the cytoplasm. The catalysed reaction is Release of an N-terminal amino acid, Xaa-|-Yaa-, in which Xaa is preferably Leu, but may be other amino acids including Pro although not Arg or Lys, and Yaa may be Pro. Amino acid amides and methyl esters are also readily hydrolyzed, but rates on arylamides are exceedingly low.. The enzyme catalyses an S-substituted L-cysteinylglycine + H2O = an S-substituted L-cysteine + glycine. It carries out the reaction L-cysteinylglycine + H2O = L-cysteine + glycine. It catalyses the reaction S-benzyl-L-cysteinylglycine + H2O = S-benzyl-L-cysteine + glycine. The catalysed reaction is Release of N-terminal proline from a peptide.. Its function is as follows. Cytosolic metallopeptidase that catalyzes the removal of unsubstituted N-terminal hydrophobic amino acids from various peptides. The presence of Zn(2+) ions is essential for the peptidase activity, and the association with other cofactors can modulate the substrate spectificity of the enzyme. For instance, in the presence of Mn(2+), it displays a specific Cys-Gly hydrolyzing activity of Cys-Gly-S-conjugates. Involved in the metabolism of glutathione and in the degradation of glutathione S-conjugates, which may play a role in the control of the cell redox status. This is Cytosol aminopeptidase (lap3) from Xenopus tropicalis (Western clawed frog).